The sequence spans 209 residues: Holliday junction branch migration complex subunit RuvA (209 aa).

The interval 1–64 (MIGRIRGMLI…EDAQSLYGFA (64 aa)) is domain I. A domain II region spans residues 65–143 (SRLDRNLFRL…QLEGQFVPSQ (79 aa)). A flexible linker region spans residues 144-157 (PDVPTGAGAATASQ). The tract at residues 158 to 209 (AGPDPREEAEAALIALGYKPQEAAKAISKVAGPDMNSETLIRLALKNMIPAG) is domain III.

The protein belongs to the RuvA family. In terms of assembly, homotetramer. Forms an RuvA(8)-RuvB(12)-Holliday junction (HJ) complex. HJ DNA is sandwiched between 2 RuvA tetramers; dsDNA enters through RuvA and exits via RuvB. An RuvB hexamer assembles on each DNA strand where it exits the tetramer. Each RuvB hexamer is contacted by two RuvA subunits (via domain III) on 2 adjacent RuvB subunits; this complex drives branch migration. In the full resolvosome a probable DNA-RuvA(4)-RuvB(12)-RuvC(2) complex forms which resolves the HJ.

Its subcellular location is the cytoplasm. In terms of biological role, the RuvA-RuvB-RuvC complex processes Holliday junction (HJ) DNA during genetic recombination and DNA repair, while the RuvA-RuvB complex plays an important role in the rescue of blocked DNA replication forks via replication fork reversal (RFR). RuvA specifically binds to HJ cruciform DNA, conferring on it an open structure. The RuvB hexamer acts as an ATP-dependent pump, pulling dsDNA into and through the RuvAB complex. HJ branch migration allows RuvC to scan DNA until it finds its consensus sequence, where it cleaves and resolves the cruciform DNA. The chain is Holliday junction branch migration complex subunit RuvA from Marinobacter nauticus (strain ATCC 700491 / DSM 11845 / VT8) (Marinobacter aquaeolei).